The chain runs to 525 residues: GMP synthase [glutamine-hydrolyzing] (525 aa).

A Glutamine amidotransferase type-1 domain is found at 9–207 (RILILDFGSQ…VRDICQCEAL (199 aa)). C86 (nucleophile) is an active-site residue. Active-site residues include H181 and E183. Residues 208 to 400 (WTPAKIIDDA…LGLPYDMLYR (193 aa)) form the GMPS ATP-PPase domain. 235–241 (SGGVDSS) is an ATP binding site.

Homodimer.

It carries out the reaction XMP + L-glutamine + ATP + H2O = GMP + L-glutamate + AMP + diphosphate + 2 H(+). It functions in the pathway purine metabolism; GMP biosynthesis; GMP from XMP (L-Gln route): step 1/1. Functionally, catalyzes the synthesis of GMP from XMP. The chain is GMP synthase [glutamine-hydrolyzing] from Escherichia coli (strain K12 / MC4100 / BW2952).